Here is a 285-residue protein sequence, read N- to C-terminus: Eukaryotic translation initiation factor 3 subunit F-2 (285 aa).

One can recognise an MPN domain in the interval 11-145; sequence VYLKPLVFFQ…TRLYCAVEMG (135 aa).

It belongs to the eIF-3 subunit F family. Component of the eukaryotic translation initiation factor 3 (eIF-3) complex. The eIF-3 complex interacts with pix.

It localises to the cytoplasm. Its function is as follows. Component of the eukaryotic translation initiation factor 3 (eIF-3) complex, which is involved in protein synthesis of a specialized repertoire of mRNAs and, together with other initiation factors, stimulates binding of mRNA and methionyl-tRNAi to the 40S ribosome. The eIF-3 complex specifically targets and initiates translation of a subset of mRNAs involved in cell proliferation. This chain is Eukaryotic translation initiation factor 3 subunit F-2, found in Drosophila melanogaster (Fruit fly).